Reading from the N-terminus, the 80-residue chain is Exodeoxyribonuclease 7 small subunit (80 aa).

This sequence belongs to the XseB family. In terms of assembly, heterooligomer composed of large and small subunits.

The protein localises to the cytoplasm. It catalyses the reaction Exonucleolytic cleavage in either 5'- to 3'- or 3'- to 5'-direction to yield nucleoside 5'-phosphates.. Functionally, bidirectionally degrades single-stranded DNA into large acid-insoluble oligonucleotides, which are then degraded further into small acid-soluble oligonucleotides. The polypeptide is Exodeoxyribonuclease 7 small subunit (Citrobacter koseri (strain ATCC BAA-895 / CDC 4225-83 / SGSC4696)).